The chain runs to 309 residues: MGLCKCPKRKVTNLFCYEHRVNVCEFCLVDNHPNCVVQSYLTWLTDQDYDPNCSLCKTTLAEGDTIRLNCLHLLHWKCFDEWAANFPATTAPAGYRCPCCSQEVFPPINEVSPLIEKLREQLKQSNWARAALGLPTLPELNRPVPSPAPPQLKNAPVMHKEVPVHNNRSSTPATHLEMEDTASYSVSNNDVTFARKKNYGAESSSDTRPLLQLRDADNEENKYKRRPTMDWMRGLWRAKHGGSGVPQERASAKKIALFVIFLAVLALITIIMVMKRAGYSGEHSSDPLFDPMANPNIRVAVEDSRLPHV.

The B box-type; degenerate zinc finger occupies 1 to 43 (MGLCKCPKRKVTNLFCYEHRVNVCEFCLVDNHPNCVVQSYLTW). The RING-type; atypical zinc-finger motif lies at 53–101 (CSLCKTTLAEGDTIRLNCLHLLHWKCFDEWAANFPATTAPAGYRCPCCS). The disordered stretch occupies residues 200–221 (GAESSSDTRPLLQLRDADNEEN). The chain crosses the membrane as a helical span at residues 254–274 (KIALFVIFLAVLALITIIMVM).

Belongs to the ZFPL1 family.

The protein resides in the membrane. This Caenorhabditis elegans protein is Zinc finger protein-like 1 homolog.